Here is a 258-residue protein sequence, read N- to C-terminus: Ribosomal RNA small subunit methyltransferase A (258 aa).

S-adenosyl-L-methionine is bound by residues histidine 13, leucine 15, glycine 40, glutamate 61, aspartate 86, and asparagine 106.

The protein belongs to the class I-like SAM-binding methyltransferase superfamily. rRNA adenine N(6)-methyltransferase family. RsmA subfamily.

Its subcellular location is the cytoplasm. The catalysed reaction is adenosine(1518)/adenosine(1519) in 16S rRNA + 4 S-adenosyl-L-methionine = N(6)-dimethyladenosine(1518)/N(6)-dimethyladenosine(1519) in 16S rRNA + 4 S-adenosyl-L-homocysteine + 4 H(+). Its function is as follows. Specifically dimethylates two adjacent adenosines (A1518 and A1519) in the loop of a conserved hairpin near the 3'-end of 16S rRNA in the 30S particle. May play a critical role in biogenesis of 30S subunits. This is Ribosomal RNA small subunit methyltransferase A from Coxiella burnetii (strain CbuG_Q212) (Coxiella burnetii (strain Q212)).